A 636-amino-acid polypeptide reads, in one-letter code: Threonine--tRNA ligase (636 aa).

A TGS domain is found at 1 to 61 (MPVITLPDGS…TQDASLQLIT (61 aa)). Positions 243–534 (DHRKIGKTLD…LIEEFTGKFP (292 aa)) are catalytic. C334, H385, and H511 together coordinate Zn(2+).

This sequence belongs to the class-II aminoacyl-tRNA synthetase family. Homodimer. Zn(2+) serves as cofactor.

The protein localises to the cytoplasm. The enzyme catalyses tRNA(Thr) + L-threonine + ATP = L-threonyl-tRNA(Thr) + AMP + diphosphate + H(+). In terms of biological role, catalyzes the attachment of threonine to tRNA(Thr) in a two-step reaction: L-threonine is first activated by ATP to form Thr-AMP and then transferred to the acceptor end of tRNA(Thr). Also edits incorrectly charged L-seryl-tRNA(Thr). The chain is Threonine--tRNA ligase from Colwellia psychrerythraea (strain 34H / ATCC BAA-681) (Vibrio psychroerythus).